Consider the following 570-residue polypeptide: Interleukin-1 receptor accessory protein (570 aa).

The signal sequence occupies residues 1-20 (MGLPWCLMSLFFCGILQSHA). Ig-like C2-type domains are found at residues 21 to 128 (SERC…VAFP), 141 to 230 (PMRL…RTMT), and 243 to 348 (PHIY…AKVK). Over 21 to 367 (SERCDDWGLD…VELACGFGAT (347 aa)) the chain is Extracellular. 5 disulfides stabilise this stretch: Cys-24-Cys-122, Cys-47-Cys-114, Cys-137-Cys-181, Cys-160-Cys-212, and Cys-266-Cys-332. A glycan (N-linked (GlcNAc...) asparagine) is linked at Asn-57. The segment at 69 to 85 (IWYWTRQDRDLEEPINF) is essential for interaction with PTPRD. Asn-107, Asn-111, Asn-118, Asn-157, Asn-196, and Asn-209 each carry an N-linked (GlcNAc...) asparagine glycan. Residues 368-388 (VFLVVVLIVVYHVYWLEMVLF) form a helical membrane-spanning segment. Residues 389–570 (YRAHFGTDET…GLSYSSLKNV (182 aa)) lie on the Cytoplasmic side of the membrane. Residues 403-546 (KEYDIYVSYA…RFWKQLQVAM (144 aa)) enclose the TIR domain. Residue Glu-482 is part of the active site. The segment at 550 to 570 (KSPRWSSSDKQGLSYSSLKNV) is disordered. The segment covering 553–570 (RWSSSDKQGLSYSSLKNV) has biased composition (polar residues). Ser-557 bears the Phosphoserine mark.

The protein belongs to the interleukin-1 receptor family. As to quaternary structure, the interleukin-36 receptor complex is a heterodimer of IL1RL2 and IL1RAP; the association is inhibited by IL36RN. The interleukin-1 receptor complex is a heterodimer of IL1R1 and IL1RAP. Associates with IL1R2 to form a non-signaling interleukin-1 receptor complex. Interacts with IL-33-bound IL1RL1 to form the minimal interleukin-33 signaling complex with a 1:1:1 stoichiometry. Interacts with KIT (independently of stimulation with KITLG/SCF). A mast cell-specific KITLG/SCF-induced interleukin-33 signaling complex contains IL1RL1, IL1RAP, KIT and MYD88. Interacts (via the first immunoglobilin domain) with PTPRD (via the third immunoglobilin domain); induces pre- and postsynaptic differentiation of neurons. As to expression, highly expressed in hypothalamus, in the dentate gyrus of hippocampus, cerebral cortex, cerebellum, liver and lung.

The protein resides in the membrane. It carries out the reaction NAD(+) + H2O = ADP-D-ribose + nicotinamide + H(+). In terms of biological role, coreceptor for IL1RL2 in the IL-36 signaling system. Coreceptor with IL1R1 in the IL-1 signaling system. Associates with IL1R1 bound to IL1B to form the high affinity interleukin-1 receptor complex which mediates interleukin-1-dependent activation of NF-kappa-B and other pathways. Signaling involves the recruitment of adapter molecules such as TOLLIP, MYD88, and IRAK1 or IRAK2 via the respective TIR domains of the receptor/coreceptor subunits. Recruits TOLLIP to the signaling complex. Does not bind to interleukin-1 alone; binding of IL1RN to IL1R1, prevents its association with IL1R1 to form a signaling complex. The cellular response is modulated through a non-signaling association with the membrane IL1R2 decoy receptor. Coreceptor for IL1RL1 in the IL-33 signaling system. Can bidirectionally induce pre- and postsynaptic differentiation of neurons by trans-synaptically binding to PTPRD. May play a role in IL1B-mediated costimulation of IFNG production from T-helper 1 (Th1) cells. This Rattus norvegicus (Rat) protein is Interleukin-1 receptor accessory protein (Il1rap).